Reading from the N-terminus, the 197-residue chain is Dehydrin DHN1 (197 aa).

A compositionally biased stretch (polar residues) spans 1–14 (MSQYQNQYGAQTGM). Disordered stretches follow at residues 1–86 (MSQY…GTNP) and 133–197 (GTEQ…CTGH). Tandem repeats lie at residues 16-21 (DEYGNP) and 26-31 (DQYGNP). Positions 16-31 (DEYGNPVNQVDQYGNP) are 2 X approximate repeats. Positions 74 to 83 (THTGGVGGYG) are enriched in gly residues. The stretch at 126 to 133 (KIKEKIPG) is one 2-1 repeat. A 2 X approximate repeats region spans residues 126 to 190 (KIKEKIPGTE…MDKIKEKLPG (65 aa)). The span at 144-160 (AGYGSTGYGASGGGIGN) shows a compositional bias: gly residues. Residues 165–188 (YVREEHRVDHGEKKGIMDKIKEKL) are compositionally biased toward basic and acidic residues. Residues 183–190 (KIKEKLPG) form a 2-2 repeat.

It belongs to the plant dehydrin family. Shoots, roots, and cotyledon from dehydrating seedlings.

The polypeptide is Dehydrin DHN1 (DHN1) (Pisum sativum (Garden pea)).